The sequence spans 296 residues: Class E basic helix-loop-helix protein 22 (296 aa).

The segment at 26–70 (SAFRPPQGLDLSQPGDRSPLHCYDGPDPSDLLRHHQHHHQASSGA) is disordered. Positions 153-207 (TLRLNINARERRRMHDLNDALDELRAVIPYAHSPSVRKLSKIATLLLAKNYILMQ) constitute a bHLH domain.

The protein resides in the nucleus. Functionally, may act as a transcriptional repressor. This chain is Class E basic helix-loop-helix protein 22 (bhlhe22), found in Xenopus tropicalis (Western clawed frog).